The chain runs to 270 residues: Protein N-terminal and lysine N-methyltransferase EFM7 (270 aa).

Residues 1–45 form a disordered region; the sequence is MSDIESLNGGDLFAEPSDFYKPPPEPHFATYTRDDVPESSTSQQK. S-adenosyl-L-methionine is bound by residues tryptophan 63, 89–91, aspartate 111, tryptophan 158, and serine 182; that span reads GAA.

The protein belongs to the class I-like SAM-binding methyltransferase superfamily. EFM7 family.

It localises to the cytoplasm. In terms of biological role, S-adenosyl-L-methionine-dependent protein methyltransferase that trimethylates the N-terminal glycine 'Gly-2' of elongation factor 1-alpha, before also catalyzing the mono- and dimethylation of 'Lys-3'. This is Protein N-terminal and lysine N-methyltransferase EFM7 from Kluyveromyces lactis (strain ATCC 8585 / CBS 2359 / DSM 70799 / NBRC 1267 / NRRL Y-1140 / WM37) (Yeast).